We begin with the raw amino-acid sequence, 261 residues long: Ribonuclease HII (261 aa).

Positions A72 to D260 constitute an RNase H type-2 domain. Residues D78, E79, and D170 each contribute to the a divalent metal cation site.

This sequence belongs to the RNase HII family. The cofactor is Mn(2+). Requires Mg(2+) as cofactor.

The protein resides in the cytoplasm. The enzyme catalyses Endonucleolytic cleavage to 5'-phosphomonoester.. Its function is as follows. Endonuclease that specifically degrades the RNA of RNA-DNA hybrids. This Staphylococcus carnosus (strain TM300) protein is Ribonuclease HII.